The chain runs to 187 residues: Probable cobalt-precorrin-6B C(15)-methyltransferase (decarboxylating) (187 aa).

S-adenosyl-L-methionine is bound by residues Thr-17, 41 to 45 (GCGTG), Asp-62, and Gly-91.

The protein belongs to the methyltransferase superfamily. Archaeal-type CbiT family.

The enzyme catalyses Co-precorrin-6B + S-adenosyl-L-methionine = Co-precorrin-7 + S-adenosyl-L-homocysteine + CO2. Its pathway is cofactor biosynthesis; adenosylcobalamin biosynthesis; cob(II)yrinate a,c-diamide from sirohydrochlorin (anaerobic route): step 8/10. Catalyzes the methylation of C-15 in cobalt-precorrin-6B followed by the decarboxylation of C-12 to form cobalt-precorrin-7. The chain is Probable cobalt-precorrin-6B C(15)-methyltransferase (decarboxylating) from Methanobrevibacter smithii (strain ATCC 35061 / DSM 861 / OCM 144 / PS).